Reading from the N-terminus, the 318-residue chain is UDP-3-O-acylglucosamine N-acyltransferase 1 (318 aa).

Residue His-230 is the Proton acceptor of the active site.

This sequence belongs to the transferase hexapeptide repeat family. LpxD subfamily. As to quaternary structure, homotrimer.

It carries out the reaction a UDP-3-O-[(3R)-3-hydroxyacyl]-alpha-D-glucosamine + a (3R)-hydroxyacyl-[ACP] = a UDP-2-N,3-O-bis[(3R)-3-hydroxyacyl]-alpha-D-glucosamine + holo-[ACP] + H(+). It functions in the pathway bacterial outer membrane biogenesis; LPS lipid A biosynthesis. Functionally, catalyzes the N-acylation of UDP-3-O-acylglucosamine using 3-hydroxyacyl-ACP as the acyl donor. Is involved in the biosynthesis of lipid A, a phosphorylated glycolipid that anchors the lipopolysaccharide to the outer membrane of the cell. This Sulfurimonas denitrificans (strain ATCC 33889 / DSM 1251) (Thiomicrospira denitrificans (strain ATCC 33889 / DSM 1251)) protein is UDP-3-O-acylglucosamine N-acyltransferase 1.